The sequence spans 263 residues: Endonuclease 8 (263 aa).

The Schiff-base intermediate with DNA role is filled by proline 2. The active-site Proton donor is the glutamate 3. Lysine 53 acts as the Proton donor; for beta-elimination activity in catalysis. Residues glutamine 70, arginine 125, and asparagine 169 each coordinate DNA. The FPG-type zinc finger occupies 229-263 (KVFHRDGEACERCGGIIEKTTLSSRPFYWCPHCQK). The active-site Proton donor; for delta-elimination activity is the arginine 253.

This sequence belongs to the FPG family. Zn(2+) serves as cofactor.

The enzyme catalyses 2'-deoxyribonucleotide-(2'-deoxyribose 5'-phosphate)-2'-deoxyribonucleotide-DNA = a 3'-end 2'-deoxyribonucleotide-(2,3-dehydro-2,3-deoxyribose 5'-phosphate)-DNA + a 5'-end 5'-phospho-2'-deoxyribonucleoside-DNA + H(+). Its function is as follows. Involved in base excision repair of DNA damaged by oxidation or by mutagenic agents. Acts as a DNA glycosylase that recognizes and removes damaged bases. Has a preference for oxidized pyrimidines, such as thymine glycol, 5,6-dihydrouracil and 5,6-dihydrothymine. Has AP (apurinic/apyrimidinic) lyase activity and introduces nicks in the DNA strand. Cleaves the DNA backbone by beta-delta elimination to generate a single-strand break at the site of the removed base with both 3'- and 5'-phosphates. This chain is Endonuclease 8, found in Salmonella agona (strain SL483).